The sequence spans 79 residues: Protein FAM236A (79 aa).

This sequence belongs to the FAM236 family.

This Homo sapiens (Human) protein is Protein FAM236A.